The sequence spans 289 residues: Urease accessory protein UreD (289 aa).

Belongs to the UreD family. As to quaternary structure, ureD, UreF and UreG form a complex that acts as a GTP-hydrolysis-dependent molecular chaperone, activating the urease apoprotein by helping to assemble the nickel containing metallocenter of UreC. The UreE protein probably delivers the nickel.

The protein resides in the cytoplasm. Functionally, required for maturation of urease via the functional incorporation of the urease nickel metallocenter. The sequence is that of Urease accessory protein UreD from Cupriavidus pinatubonensis (strain JMP 134 / LMG 1197) (Cupriavidus necator (strain JMP 134)).